A 362-amino-acid chain; its full sequence is 3-dehydroquinate synthase (362 aa).

Residues D71–K76, G105–D109, T129–T130, K142, K151, and C169–T172 contribute to the NAD(+) site. 3 residues coordinate Zn(2+): E184, H247, and H264.

This sequence belongs to the sugar phosphate cyclases superfamily. Dehydroquinate synthase family. The cofactor is NAD(+). Requires Co(2+) as cofactor. Zn(2+) serves as cofactor.

The protein resides in the cytoplasm. The catalysed reaction is 7-phospho-2-dehydro-3-deoxy-D-arabino-heptonate = 3-dehydroquinate + phosphate. The protein operates within metabolic intermediate biosynthesis; chorismate biosynthesis; chorismate from D-erythrose 4-phosphate and phosphoenolpyruvate: step 2/7. In terms of biological role, catalyzes the conversion of 3-deoxy-D-arabino-heptulosonate 7-phosphate (DAHP) to dehydroquinate (DHQ). The protein is 3-dehydroquinate synthase of Salmonella typhi.